The chain runs to 268 residues: Glutamate racemase (268 aa).

Substrate is bound by residues 14 to 15 (DS) and 46 to 47 (YG). Catalysis depends on Cys-78, which acts as the Proton donor/acceptor. Position 79 to 80 (79 to 80 (NS)) interacts with substrate. Residue Cys-190 is the Proton donor/acceptor of the active site. 191 to 192 (TH) serves as a coordination point for substrate.

The protein belongs to the aspartate/glutamate racemases family.

The catalysed reaction is L-glutamate = D-glutamate. It functions in the pathway cell wall biogenesis; peptidoglycan biosynthesis. In terms of biological role, provides the (R)-glutamate required for cell wall biosynthesis. The polypeptide is Glutamate racemase (Treponema pallidum (strain Nichols)).